The primary structure comprises 143 residues: Submaxillary gland androgen-regulated protein 2, isoform gamma (143 aa).

Positions 1 to 22 are cleaved as a signal peptide; that stretch reads MKALYMVFVLWVLIGCFLSSEC. The disordered stretch occupies residues 28–50; sequence GQHDPTRPLSPSNPSSHFYPQPD. The segment covering 36 to 45 has biased composition (polar residues); sequence LSPSNPSSHF.

Its subcellular location is the secreted. Its function is as follows. May play a role in protection or detoxification. In Mus musculus (Mouse), this protein is Submaxillary gland androgen-regulated protein 2, isoform gamma (Smr2).